The sequence spans 183 residues: Probable GTP-binding protein EngB (183 aa).

Residues 18 to 183 (DQNEIVFWGR…LSDLVEHFEL (166 aa)) form the EngB-type G domain. Residues 26 to 33 (GRSNVGKS), 52 to 56 (GRTRL), 70 to 73 (DLPG), 137 to 140 (TKID), and 166 to 168 (VSS) contribute to the GTP site. Mg(2+) contacts are provided by S33 and T54.

Belongs to the TRAFAC class TrmE-Era-EngA-EngB-Septin-like GTPase superfamily. EngB GTPase family. The cofactor is Mg(2+).

Functionally, necessary for normal cell division and for the maintenance of normal septation. The polypeptide is Probable GTP-binding protein EngB (Metamycoplasma arthritidis (strain 158L3-1) (Mycoplasma arthritidis)).